Here is an 810-residue protein sequence, read N- to C-terminus: Phenylalanine--tRNA ligase beta subunit (810 aa).

In terms of domain architecture, tRNA-binding spans 39–150 (RTWANGVVVG…ENLPLGSDVR (112 aa)). Positions 411 to 495 (TWSRSIFLRL…RLYGYDNFCD (85 aa)) constitute a B5 domain. Positions 473, 479, 482, and 483 each coordinate Mg(2+). The 94-residue stretch at 716–809 (STYPASDRDI…LVEKFGVNLR (94 aa)) folds into the FDX-ACB domain.

Belongs to the phenylalanyl-tRNA synthetase beta subunit family. Type 1 subfamily. Tetramer of two alpha and two beta subunits. The cofactor is Mg(2+).

It is found in the cytoplasm. The enzyme catalyses tRNA(Phe) + L-phenylalanine + ATP = L-phenylalanyl-tRNA(Phe) + AMP + diphosphate + H(+). This Trichormus variabilis (strain ATCC 29413 / PCC 7937) (Anabaena variabilis) protein is Phenylalanine--tRNA ligase beta subunit.